We begin with the raw amino-acid sequence, 365 residues long: MKEVKEALFMNKGEGESSYAQNSSFTQTVTSMTMPVLENAVETLFSKDFHLLQALNAVDLGCAAGPTTFTVISTIKRMMEKKCRELNCQTLELQVYLNDLPGNDFNTLFKGLPSKVVGNKCEEVSCYVVGVPGSFHGRLFPRNSLHLVHSCYSVHWLTQAPKGLTSKEGLALNKGKIYISKTSPPVVREAYLSQFHEDFTMFLNSRSQEVVPNGCMVLILRGRLSSDPSDMGSCFTWELLAVAIAELVSQGLIDEDKLDTFNVPSYFPSLEEVKDIVERNGSFTIDHMEGFELDSPEMQENDKWVRGEKFATVARAFTEPIISNQFGHEIMDKLYEKFTHIVVSDFEAKIPKITSIILVLSKIVG.

Residue Tyr-19 participates in S-adenosyl-L-homocysteine binding. Thr-26 lines the caffeine pocket. Residues Cys-62, Asp-99, Leu-100, Ser-134, and Phe-135 each contribute to the S-adenosyl-L-homocysteine site. Caffeine contacts are provided by Tyr-152, His-155, and Trp-156. Residue Asn-173 coordinates Mg(2+). Residue Arg-221 participates in caffeine binding. Mg(2+)-binding residues include Asp-259, Phe-261, and Asn-262. Phe-317 is a caffeine binding site.

It belongs to the methyltransferase superfamily. Type-7 methyltransferase family. Requires Mg(2+) as cofactor.

The catalysed reaction is 7-methylxanthine + S-adenosyl-L-methionine = theobromine + S-adenosyl-L-homocysteine + H(+). The enzyme catalyses theobromine + S-adenosyl-L-methionine = caffeine + S-adenosyl-L-homocysteine + H(+). It carries out the reaction 1,7-dimethylxanthine + S-adenosyl-L-methionine = caffeine + S-adenosyl-L-homocysteine + H(+). The protein operates within alkaloid biosynthesis. In terms of biological role, may be involved in the biosynthesis of caffeine. Catalyzes the conversion of 7-methylxanthine (7mX) to theobromine and of theobromine to caffeine. Has 1-N-methylation activity. In Camellia sinensis (Tea plant), this protein is Probable caffeine synthase 2.